A 427-amino-acid polypeptide reads, in one-letter code: Peptidase B (427 aa).

Mn(2+) contacts are provided by lysine 195 and aspartate 200. The active site involves lysine 207. The Mn(2+) site is built by aspartate 218, aspartate 277, and glutamate 279. The active site involves arginine 281.

This sequence belongs to the peptidase M17 family. As to quaternary structure, homohexamer. Mn(2+) is required as a cofactor.

Its subcellular location is the cytoplasm. It carries out the reaction Release of an N-terminal amino acid, Xaa, from a peptide or arylamide. Xaa is preferably Glu or Asp but may be other amino acids, including Leu, Met, His, Cys and Gln.. Functionally, probably plays an important role in intracellular peptide degradation. This Shigella boydii serotype 18 (strain CDC 3083-94 / BS512) protein is Peptidase B.